We begin with the raw amino-acid sequence, 440 residues long: Thymidine phosphorylase (440 aa).

Belongs to the thymidine/pyrimidine-nucleoside phosphorylase family. Homodimer.

It carries out the reaction thymidine + phosphate = 2-deoxy-alpha-D-ribose 1-phosphate + thymine. It participates in pyrimidine metabolism; dTMP biosynthesis via salvage pathway; dTMP from thymine: step 1/2. Its function is as follows. The enzymes which catalyze the reversible phosphorolysis of pyrimidine nucleosides are involved in the degradation of these compounds and in their utilization as carbon and energy sources, or in the rescue of pyrimidine bases for nucleotide synthesis. This is Thymidine phosphorylase from Escherichia coli (strain K12 / DH10B).